A 358-amino-acid chain; its full sequence is NADH-quinone oxidoreductase subunit H (358 aa).

8 helical membrane-spanning segments follow: residues 20 to 40 (ITVG…IPLI), 95 to 115 (ALFY…WAVI), 128 to 148 (IGLL…IIAG), 168 to 188 (ISYE…SGSM), 206 to 226 (VFSW…ISAV), 253 to 273 (GFAF…IAAL), 295 to 315 (TPSA…YLWI), and 334 to 354 (VLIP…ISPL).

This sequence belongs to the complex I subunit 1 family. In terms of assembly, NDH-1 is composed of 14 different subunits. Subunits NuoA, H, J, K, L, M, N constitute the membrane sector of the complex.

The protein resides in the cell inner membrane. The enzyme catalyses a quinone + NADH + 5 H(+)(in) = a quinol + NAD(+) + 4 H(+)(out). Functionally, NDH-1 shuttles electrons from NADH, via FMN and iron-sulfur (Fe-S) centers, to quinones in the respiratory chain. The immediate electron acceptor for the enzyme in this species is believed to be ubiquinone. Couples the redox reaction to proton translocation (for every two electrons transferred, four hydrogen ions are translocated across the cytoplasmic membrane), and thus conserves the redox energy in a proton gradient. This subunit may bind ubiquinone. This is NADH-quinone oxidoreductase subunit H from Neisseria meningitidis serogroup B (strain ATCC BAA-335 / MC58).